The sequence spans 1225 residues: DNA-directed RNA polymerase subunit beta' (1225 aa).

Zn(2+)-binding residues include C60, C62, C75, and C78. Positions 450, 452, and 454 each coordinate Mg(2+). Zn(2+) is bound by residues C818, C892, C899, and C902.

It belongs to the RNA polymerase beta' chain family. As to quaternary structure, the RNAP catalytic core consists of 2 alpha, 1 beta, 1 beta' and 1 omega subunit. When a sigma factor is associated with the core the holoenzyme is formed, which can initiate transcription. It depends on Mg(2+) as a cofactor. Zn(2+) is required as a cofactor.

It catalyses the reaction RNA(n) + a ribonucleoside 5'-triphosphate = RNA(n+1) + diphosphate. DNA-dependent RNA polymerase catalyzes the transcription of DNA into RNA using the four ribonucleoside triphosphates as substrates. The sequence is that of DNA-directed RNA polymerase subunit beta' from Streptococcus pneumoniae (strain ATCC BAA-255 / R6).